We begin with the raw amino-acid sequence, 605 residues long: Pyruvate decarboxylase 1 (605 aa).

Positions 67 and 154 each coordinate substrate. Residues 432–514 (DSWFNCQKLR…FLINNGGYTI (83 aa)) are thiamine pyrophosphate binding. The Mg(2+) site is built by Asp-482, Asn-509, and Gly-511. Residue Glu-515 coordinates substrate.

This sequence belongs to the TPP enzyme family. Homotetramer. A metal cation serves as cofactor. Thiamine diphosphate is required as a cofactor.

The enzyme catalyses a 2-oxocarboxylate + H(+) = an aldehyde + CO2. This chain is Pyruvate decarboxylase 1 (PDC1), found in Oryza sativa subsp. indica (Rice).